Consider the following 629-residue polypeptide: Ras GTPase-activating protein gap-1 (629 aa).

The region spanning 183–398 (DRIRPVLSSL…SVMASFLDNI (216 aa)) is the Ras-GAP domain. The region spanning 411 to 507 (TVFKFGNLQQ…WLNAIERQRN (97 aa)) is the PH domain.

It localises to the cytoplasm. Functionally, GTPase-activating protein, which inhibits the vulval induction by acting as a negative regulator for the member of the Ras family let-60. Probably decreases the signaling activity of Ras by stimulating its intrinsic GTPase activity, thereby lowering the levels of GTP-bound, active Ras. This Caenorhabditis elegans protein is Ras GTPase-activating protein gap-1 (gap-1).